The following is a 240-amino-acid chain: Biotin--[acetyl-CoA-carboxylase] ligase (240 aa).

Residues methionine 1–aspartate 176 form the BPL/LPL catalytic domain. Biotin is bound by residues serine 7–asparagine 9, glutamine 30, arginine 34–arginine 36, and lysine 102.

It belongs to the biotin--protein ligase family.

It catalyses the reaction biotin + L-lysyl-[protein] + ATP = N(6)-biotinyl-L-lysyl-[protein] + AMP + diphosphate + H(+). Activates biotin to form biotinyl-5'-adenylate and transfers the biotin moiety to biotin-accepting proteins. The sequence is that of Biotin--[acetyl-CoA-carboxylase] ligase (birA) from Paracoccus denitrificans.